The following is a 498-amino-acid chain: ATP synthase subunit beta, chloroplastic (498 aa).

Residue 172-179 (GGAGVGKT) participates in ATP binding.

This sequence belongs to the ATPase alpha/beta chains family. In terms of assembly, F-type ATPases have 2 components, CF(1) - the catalytic core - and CF(0) - the membrane proton channel. CF(1) has five subunits: alpha(3), beta(3), gamma(1), delta(1), epsilon(1). CF(0) has four main subunits: a(1), b(1), b'(1) and c(9-12).

The protein localises to the plastid. The protein resides in the chloroplast thylakoid membrane. The enzyme catalyses ATP + H2O + 4 H(+)(in) = ADP + phosphate + 5 H(+)(out). In terms of biological role, produces ATP from ADP in the presence of a proton gradient across the membrane. The catalytic sites are hosted primarily by the beta subunits. The sequence is that of ATP synthase subunit beta, chloroplastic from Hyphaene coriacea (Ilala palm).